A 732-amino-acid chain; its full sequence is Prolyl endopeptidase-like (732 aa).

Catalysis depends on charge relay system residues Ser575, Asp661, and His707.

This sequence belongs to the peptidase S9A family. In terms of assembly, homodimer.

It localises to the cytoplasm. The protein localises to the cytosol. Serine peptidase whose precise substrate specificity remains unclear. Does not cleave peptides after a arginine or lysine residue. Regulates trans-Golgi network morphology and sorting by regulating the membrane binding of the AP-1 complex. May play a role in the regulation of synaptic vesicle exocytosis. The chain is Prolyl endopeptidase-like (PREPL) from Gallus gallus (Chicken).